A 152-amino-acid polypeptide reads, in one-letter code: Large ribosomal subunit protein bL9 (152 aa).

It belongs to the bacterial ribosomal protein bL9 family.

In terms of biological role, binds to the 23S rRNA. In Chlorobaculum tepidum (strain ATCC 49652 / DSM 12025 / NBRC 103806 / TLS) (Chlorobium tepidum), this protein is Large ribosomal subunit protein bL9.